The primary structure comprises 242 residues: Lectin-like protein At1g53060 (242 aa).

A legume-lectin like region spans residues 3-237 (FHGDAEYASE…RHEILDWSFE (235 aa)). A Phosphoserine modification is found at S207.

It belongs to the leguminous lectin family.

In Arabidopsis thaliana (Mouse-ear cress), this protein is Lectin-like protein At1g53060.